Consider the following 408-residue polypeptide: Probable E3 ubiquitin-protein ligase makorin-1 (408 aa).

2 C3H1-type zinc fingers span residues Trp34–Ala61 and Ser63–Pro90. Disordered regions lie at residues Pro90–Ile114 and Glu154–Pro173. A compositionally biased stretch (basic and acidic residues) spans Lys162–Pro173. The segment at Glu174–Pro201 adopts a C3H1-type 3 zinc-finger fold. Positions Cys202–His229 are makorin-type Cys-His. Residues Cys247–Arg301 form an RING-type zinc finger. The segment at Ala330–Pro359 adopts a C3H1-type 4 zinc-finger fold. Positions Ile363–Leu408 are disordered.

The enzyme catalyses S-ubiquitinyl-[E2 ubiquitin-conjugating enzyme]-L-cysteine + [acceptor protein]-L-lysine = [E2 ubiquitin-conjugating enzyme]-L-cysteine + N(6)-ubiquitinyl-[acceptor protein]-L-lysine.. The protein operates within protein modification; protein ubiquitination. Functionally, E3 ubiquitin ligase catalyzing the covalent attachment of ubiquitin moieties onto substrate proteins. This is Probable E3 ubiquitin-protein ligase makorin-1 (mkrn1) from Xenopus laevis (African clawed frog).